An 85-amino-acid polypeptide reads, in one-letter code: MRKHSDCMNFCAVDATKGICRLSKQMINLDDSACPEIKVMPKCKNCKNFVEANDEGIGKCVGLEKEDWVYSTLNAITCEGHVFNE.

Positions 4, 7, 20, 34, 43, 46, 60, and 78 each coordinate [4Fe-4S] cluster.

Belongs to the HPA decarboxylase small subunit family. Heterooctamer consisting of 4 large (HpdB) subunits and 4 small (HpdC) subunits, arranged as a tetramer of heterodimers. It depends on [4Fe-4S] cluster as a cofactor.

It catalyses the reaction 4-hydroxyphenylacetate + H(+) = 4-methylphenol + CO2. The catalysed reaction is 3,4-dihydroxyphenylacetate + H(+) = 4-methylcatechol + CO2. Component of the HPA decarboxylase that decarboxylates phenylacetates with a hydroxyl group in the p-position. Active toward 4-hydroxyphenylacetate and 3,4-dihydroxyphenylacetate, forming 4-methylphenol and 4-methylcatechol, respectively. Is likely involved in the catabolism of aromatic amino acids such as tyrosine fermentation. 4-methylphenol (p-cresol) formation provides metabolic toxicity, which allows an active suppression of other microbes and may provide growth advantages for the producers in highly competitive environments. The small subunit is essential for enzymatic activity of HPA decarboxylase, and also seems to be involved in the regulation of the enzyme oligomeric state and catalytic activity. The polypeptide is 4-hydroxyphenylacetate decarboxylase small subunit (Clostridioides difficile (strain CD196) (Peptoclostridium difficile)).